A 299-amino-acid polypeptide reads, in one-letter code: MEYFELMFKTAKELEESIVAILEDVDSIGIAIEDNFFDESILWDYIDKSFSERNYILIKAYFDRNVDIDRIIDKIRTKIKEIFGEAKVEIEYRIIREEDWTNKWKKYAKPIYLDRIVVLPSWEEIGNVEDRILIRIDPGMAFGTGNHPTTIMCIEMLQKYLKEGMDVLDVGTGSGILSIVAKKLGGDKVKGVDIDEKAIEVAKKNAEGNHVEVEFQKNDLIDGINEKYDIVVANLIAEIILKLNANVKRVLKTDGIYIVSGIVQEKLDMILNSLRESGFKLLEVKEKEDWYTVVAQNED.

S-adenosyl-L-methionine is bound by residues Thr-150, Gly-171, Asp-193, and Asn-234.

Belongs to the methyltransferase superfamily. PrmA family.

It localises to the cytoplasm. The enzyme catalyses L-lysyl-[protein] + 3 S-adenosyl-L-methionine = N(6),N(6),N(6)-trimethyl-L-lysyl-[protein] + 3 S-adenosyl-L-homocysteine + 3 H(+). In terms of biological role, methylates ribosomal protein L11. This Dictyoglomus turgidum (strain DSM 6724 / Z-1310) protein is Ribosomal protein L11 methyltransferase.